An 812-amino-acid polypeptide reads, in one-letter code: DNA replication licensing factor MCM3 (812 aa).

The region spanning 296 to 503 (IFNQLARSLA…QDREISDHVL (208 aa)) is the MCM domain. Positions 354, 394, 395, 396, and 398 each coordinate ADP. The Arginine finger motif lies at 478-481 (SRFD). ATP contacts are provided by Ala-524 and Arg-665. The disordered stretch occupies residues 663–741 (KKRKKQVEDD…SSATGEAKKP (79 aa)). 2 stretches are compositionally biased toward acidic residues: residues 671 to 684 (DDSE…EEET) and 702 to 719 (GEEE…EQEM).

It belongs to the MCM family. In terms of assembly, component of the MCM2-7 complex. The complex forms a toroidal hexameric ring with the proposed subunit order MCM2-MCM6-MCM4-MCM7-MCM3-MCM5. Component of the CMG helicase complex, a hexameric ring of related MCM2-7 subunits stabilized by CDC45 and the tetrameric GINS complex.

Its subcellular location is the nucleus. It localises to the chromosome. It carries out the reaction ATP + H2O = ADP + phosphate + H(+). In terms of biological role, acts as a component of the MCM2-7 complex (MCM complex) which is the replicative helicase essential for 'once per cell cycle' DNA replication initiation and elongation in eukaryotic cells. Core component of CDC45-MCM-GINS (CMG) helicase, the molecular machine that unwinds template DNA during replication, and around which the replisome is built. The active ATPase sites in the MCM2-7 ring are formed through the interaction surfaces of two neighboring subunits such that a critical structure of a conserved arginine finger motif is provided in trans relative to the ATP-binding site of the Walker A box of the adjacent subunit. The six ATPase active sites, however, are likely to contribute differentially to the complex helicase activity. Required for the entry in S phase and for cell division. This chain is DNA replication licensing factor MCM3 (MCM3), found in Gallus gallus (Chicken).